Reading from the N-terminus, the 163-residue chain is NADPH-dependent 7-cyano-7-deazaguanine reductase (163 aa).

Cys54 serves as the catalytic Thioimide intermediate. Residue Asp61 is the Proton donor of the active site. Substrate contacts are provided by residues 76-78 (VES) and 95-96 (HE).

This sequence belongs to the GTP cyclohydrolase I family. QueF type 1 subfamily.

The protein localises to the cytoplasm. It carries out the reaction 7-aminomethyl-7-carbaguanine + 2 NADP(+) = 7-cyano-7-deazaguanine + 2 NADPH + 3 H(+). The protein operates within tRNA modification; tRNA-queuosine biosynthesis. Its function is as follows. Catalyzes the NADPH-dependent reduction of 7-cyano-7-deazaguanine (preQ0) to 7-aminomethyl-7-deazaguanine (preQ1). The sequence is that of NADPH-dependent 7-cyano-7-deazaguanine reductase from Streptococcus thermophilus (strain CNRZ 1066).